Here is a 681-residue protein sequence, read N- to C-terminus: T-box brain protein 1 (681 aa).

Disordered regions lie at residues threonine 43–leucine 83 and serine 108–proline 127. Polar residues predominate over residues glycine 58–phenylalanine 68. Over residues serine 108 to alanine 122 the composition is skewed to low complexity. The segment at residues leucine 213 to aspartate 393 is a DNA-binding region (T-box). Residue threonine 408 is modified to Phosphothreonine. Serine 410 bears the Phosphoserine mark. A disordered region spans residues proline 447 to arginine 483. Positions proline 462–glutamine 472 are enriched in polar residues. A Phosphoserine modification is found at serine 594. The interval alanine 597–serine 655 is disordered. Over residues serine 618–serine 628 the composition is skewed to low complexity. Serine 640 carries the phosphoserine modification.

In terms of assembly, homodimer. Part of a complex containing CASK, TBR1 and TSPYL2; may modulate gene expression in response to neuronal synaptic activity. Forms homodimers. Interacts with FOXP2. Interacts with FOXP1. Interacts with BCL11A. In terms of tissue distribution, expressed in the developing and adult cortex. Expressed in the olfactory bulbs.

The protein localises to the nucleus. Functionally, transcriptional repressor involved in multiple aspects of cortical development, including neuronal migration, laminar and areal identity, and axonal projection. As transcriptional repressor of FEZF2, it blocks the formation of the corticospinal (CS) tract from layer 6 projection neurons, thereby restricting the origin of CS axons specifically to layer 5 neurons. In Mus musculus (Mouse), this protein is T-box brain protein 1 (Tbr1).